Consider the following 847-residue polypeptide: Putative disease resistance RPP13-like protein 2 (847 aa).

Residues 26–42 (GVKDDLEELKTELTCIQ) are a coiled coil. The region spanning 142–446 (STSRVREVRR…AEGFIQEDEE (305 aa)) is the NB-ARC domain. An ATP-binding site is contributed by 191–198 (GMEGLGKT). LRR repeat units follow at residues 587–610 (LVHLRYLGIADTVVNNLPDFISNL), 612–634 (FLQTLDASGNSFERMTDLSNLTS), 703–726 (LKNLRVLKIEVVSFSLFSEETVRF), 749–774 (FPSLESLTLVTNLQEDPMPTLQKLQR), and 807–830 (IKRLDELEIEEEAMPCLMKLNLDN).

It belongs to the disease resistance NB-LRR family. RPP13 subfamily.

In terms of biological role, potential disease resistance protein. The protein is Putative disease resistance RPP13-like protein 2 (RPP13L2) of Arabidopsis thaliana (Mouse-ear cress).